Reading from the N-terminus, the 243-residue chain is Nuclear protein UL4 homolog (243 aa).

The interval 193-226 (RPDDQTTPTPTPHQYTSQRRQPETNCPSPQPAFF) is disordered. Residues 205–219 (HQYTSQRRQPETNCP) show a composition bias toward polar residues.

The protein belongs to the alphaherpesvirinae HHV-1 UL4 family.

It is found in the host nucleus. The protein is Nuclear protein UL4 homolog of Varicella-zoster virus (strain Oka vaccine) (HHV-3).